The sequence spans 493 residues: Na(+)/H(+) antiporter subunit D (493 aa).

The next 14 membrane-spanning stretches (helical) occupy residues 4–23 (LVIL…ILFA), 30–52 (RVIS…VDVY), 72–94 (LVAD…VCLF), 107–126 (YYFY…AFLT), 130–149 (FNLF…LIVL), 162–184 (YVVI…YSIT), 204–226 (VLNV…FPLY), 233–255 (YFGP…GIYA), 270–292 (FTHT…GAVS), 299–321 (ILSY…YTQL), 325–347 (GAIY…AGAT), 368–390 (WLAW…SGFF), 405–427 (YIIA…KIFI), and 448–470 (LLLP…EPIF).

This sequence belongs to the CPA3 antiporters (TC 2.A.63) subunit D family. As to quaternary structure, forms a heterooligomeric complex that consists of seven subunits: MrpA, MrpB, MrpC, MrpD, MrpE, MrpF and MrpG.

The protein localises to the cell membrane. Mnh complex is a Na(+)Li(+)/H(+) antiporter involved in Na(+) and/or Li(+) excretion and Na(+) resistance. Na(+)/H(+) antiport consumes a transmembrane electrical potential, and is thus inferred to be electrogenic. Does not transport K(+), Ca(2+) or Mg(2+). Functionally, mrp complex is a Na(+)/H(+) antiporter involved in Na(+) excretion and Na(+) resistance. The chain is Na(+)/H(+) antiporter subunit D (mrpD) from Alkalihalophilus pseudofirmus (strain ATCC BAA-2126 / JCM 17055 / OF4) (Bacillus pseudofirmus).